The sequence spans 379 residues: MATAGKVIKCKAAVAWEAGKPLSIEEVEVAPPQAMEVRVKILFTSLCHTDVYFWEAKGQTPVFPRIFGHEAGGIIESVGEGVTDVAPGDHVLPVFTGECKECAHCKSAESNMCDLLRINTDRGVMIADGKSRFSINGKPIYHFVGTSTFSEYTVMHVGCVAKINPQAPLDKVCVLSCGYSTGLGASINVAKPPKGSTVAVFGLGAVGLAAAEGARIAGASRIIGVDLNPSRFEEARKFGCTEFVNPKDHNKPVQEVLAEMTNGGVDRSVECTGNINAMIQAFECVHDGWGVAVLVGVPHKDAEFKTHPMNFLNERTLKGTFFGNYKPRTDLPNVVELYMKKELEVEKFITHSVPFAEINKAFDLMAKGEGIRCIIRMEN.

8 residues coordinate Zn(2+): C47, T49, H69, C99, C102, C105, C113, and C177. Residues T49 and H69 each contribute to the an alcohol site. T49 is an NAD(+) binding site. NAD(+) contacts are provided by residues 202 to 207 (GLGAVG), D226, R231, T272, V295, 295 to 297 (VGV), F322, and R372.

The protein belongs to the zinc-containing alcohol dehydrogenase family. As to quaternary structure, homodimer. Zn(2+) serves as cofactor.

It localises to the cytoplasm. It catalyses the reaction a primary alcohol + NAD(+) = an aldehyde + NADH + H(+). It carries out the reaction a secondary alcohol + NAD(+) = a ketone + NADH + H(+). The polypeptide is Alcohol dehydrogenase 1 (ADH1) (Zea mays (Maize)).